Here is a 215-residue protein sequence, read N- to C-terminus: Ras-related protein Rab-5B (215 aa).

Ser29, Ala30, Gly32, Lys33, Ser34, Ser35, His46, Glu47, Thr52, Gly78, Asn133, Lys134, Asp136, Ala164, and Lys165 together coordinate GTP. Ser34 provides a ligand contact to Mg(2+). Short sequence motifs (switch) lie at residues 44 to 56 (QFHE…IGAA) and 77 to 93 (AGQE…YRGA). Residue Thr52 participates in Mg(2+) binding. The disordered stretch occupies residues 184 to 215 (SEPQSTSGAAGRSRGVDLHEQTQQNKSQCCSN). Over residues 204 to 215 (QTQQNKSQCCSN) the composition is skewed to polar residues. Residues Cys212 and Cys213 are each lipidated (S-geranylgeranyl cysteine).

The protein belongs to the small GTPase superfamily. Rab family. The cofactor is Mg(2+).

It localises to the cell membrane. The protein resides in the early endosome membrane. The enzyme catalyses GTP + H2O = GDP + phosphate + H(+). With respect to regulation, regulated by guanine nucleotide exchange factors (GEFs) which promote the exchange of bound GDP for free GTP. Regulated by GTPase activating proteins (GAPs) which increase the GTP hydrolysis activity. Inhibited by GDP dissociation inhibitors (GDIs). In terms of biological role, the small GTPases Rab are key regulators of intracellular membrane trafficking, from the formation of transport vesicles to their fusion with membranes. Rabs cycle between an inactive GDP-bound form and an active GTP-bound form that is able to recruit to membranes different sets of downstream effectors directly responsible for vesicle formation, movement, tethering and fusion. The chain is Ras-related protein Rab-5B (RAB5B) from Gallus gallus (Chicken).